A 567-amino-acid polypeptide reads, in one-letter code: Alpha-glucosidase (567 aa).

An N-terminal signal peptide occupies residues 1–17 (MKAVIVFCLMALSIVDA). N-linked (GlcNAc...) asparagine glycosylation is found at N88 and N123. D223 (nucleophile) is an active-site residue. N-linked (GlcNAc...) asparagine glycosylation is present at N247. E286 (proton donor) is an active-site residue. 5 N-linked (GlcNAc...) asparagine glycosylation sites follow: N290, N313, N319, N499, and N507.

In terms of assembly, monomer. Expressed specifically in the hypopharyngeal glands of worker bees. Also found in the brain of worker bees (at protein level).

It carries out the reaction Hydrolysis of terminal, non-reducing (1-&gt;4)-linked alpha-D-glucose residues with release of alpha-D-glucose.. Functionally, converts sucrose in nectar to glucose and fructose. The sequence is that of Alpha-glucosidase from Apis mellifera (Honeybee).